The primary structure comprises 191 residues: Small ribosomal subunit protein uS5 (191 aa).

An S5 DRBM domain is found at 21-84; the sequence is LVDKLVTINR…ERAKRTMIRV (64 aa). The segment at 161-191 is disordered; that stretch reads PRHVASRRGKKAAELFGKREQGQTEAEVTNG. Over residues 171 to 182 the composition is skewed to basic and acidic residues; the sequence is KAAELFGKREQG.

Belongs to the universal ribosomal protein uS5 family. In terms of assembly, part of the 30S ribosomal subunit. Contacts proteins S4 and S8.

Functionally, with S4 and S12 plays an important role in translational accuracy. In terms of biological role, located at the back of the 30S subunit body where it stabilizes the conformation of the head with respect to the body. In Gluconobacter oxydans (strain 621H) (Gluconobacter suboxydans), this protein is Small ribosomal subunit protein uS5.